Consider the following 286-residue polypeptide: Bifunctional protein FolD (286 aa).

Residues 165 to 167 (GRS) and S190 contribute to the NADP(+) site.

Belongs to the tetrahydrofolate dehydrogenase/cyclohydrolase family. Homodimer.

The catalysed reaction is (6R)-5,10-methylene-5,6,7,8-tetrahydrofolate + NADP(+) = (6R)-5,10-methenyltetrahydrofolate + NADPH. It carries out the reaction (6R)-5,10-methenyltetrahydrofolate + H2O = (6R)-10-formyltetrahydrofolate + H(+). Its pathway is one-carbon metabolism; tetrahydrofolate interconversion. Functionally, catalyzes the oxidation of 5,10-methylenetetrahydrofolate to 5,10-methenyltetrahydrofolate and then the hydrolysis of 5,10-methenyltetrahydrofolate to 10-formyltetrahydrofolate. The sequence is that of Bifunctional protein FolD from Staphylococcus aureus (strain bovine RF122 / ET3-1).